Reading from the N-terminus, the 140-residue chain is Histone H3-like protein (140 aa).

Residues 1–36 (MSRTKQTASKALGGKAPRKGISAKSIPSSGCSPAMP) form a disordered region. At lysine 5 the chain carries N6,N6,N6-trimethyllysine; alternate. At lysine 5 the chain carries N6,N6-dimethyllysine; alternate. 2 positions are modified to N6-methyllysine; alternate: lysine 5 and lysine 10. 4 positions are modified to N6-acetyllysine; alternate: lysine 10, lysine 15, lysine 19, and lysine 24. Lysine 15 is modified (N6,N6-dimethyllysine; alternate). An N6-methyllysine; alternate mark is found at lysine 19 and lysine 24. N6-acetyllysine occurs at positions 56 and 64.

It belongs to the histone H3 family. The nucleosome is a histone octamer containing two molecules each of H2A, H2B, H3 and H4 assembled in one H3-H4 heterotetramer and two H2A-H2B heterodimers. The octamer wraps approximately 147 bp of DNA. Post-translationally, mono-, di- and trimethylated to form H3K4me1/2/3. H3K4me activates gene expression by regulating transcription elongation and plays a role in telomere length maintenance. H3K4me enrichment correlates with transcription levels, and occurs in a 5' to 3' gradient with H3K4me3 enrichment at the 5'-end of genes, shifting to H3K4me2 and then H3K4me1. In terms of processing, acetylation of histone H3 leads to transcriptional activation.

The protein localises to the nucleus. Its subcellular location is the chromosome. Functionally, core component of nucleosome. Nucleosomes wrap and compact DNA into chromatin, limiting DNA accessibility to the cellular machineries which require DNA as a template. Histones thereby play a central role in transcription regulation, DNA repair, DNA replication and chromosomal stability. DNA accessibility is regulated via a complex set of post-translational modifications of histones, also called histone code, and nucleosome remodeling. The polypeptide is Histone H3-like protein (Encephalitozoon cuniculi (strain GB-M1) (Microsporidian parasite)).